A 692-amino-acid chain; its full sequence is MALLLVSLLAFLGTGSGCHHWLCHCSNRVFLCQDSKVTEIPTDLPRNAIELRFVLTKLRVIPKGSFAGFGDLEKIEISQNDVLEVIEADVFSNLPKLHEIRIEKANNLLYINPEAFQNLPSLRYLLISNTGIKHLPAVHKIQSLQKVLLDIQDNINIHIVARNSFMGLSFESVILWLSKNGIEEIHNCAFNGTQLDELNLSDNNNLEELPNDVFQGASGPVILDISRTKVHSLPNHGLENLKKLRARSTYRLKKLPNLDKFVTLMEASLTYPSHCCAFANLKRQISELHPICNKSILRQDIDDMTQIGDQRVSLIDDEPSYGKGSDMMYNEFDYDLCNEVVDVTCSPKPDAFNPCEDIMGYNILRVLIWFISILAITGNTTVLVVLTTSQYKLTVPRFLMCNLAFADLCIGIYLLLIASVDIHTKSQYHNYAIDWQTGAGCDAAGFFTVFASELSVYTLTAITLERWHTITHAMQLECKVQLRHAASVMVLGWTFAFAAALFPIFGISSYMKVSICLPMDIDSPLSQLYVMALLVLNVLAFVVICGCYTHIYLTVRNPTIVSSSSDTKIAKRMATLIFTDFLCMAPISFFAISASLKVPLITVSKAKILLVLFYPINSCANPFLYAIFTKNFRRDFFILLSKFGCYEMQAQIYRTETSSATHNFHARKSHCSSAPRVTNSYVLVPLNHSSQN.

Positions 1-17 are cleaved as a signal peptide; the sequence is MALLLVSLLAFLGTGSG. 2 disulfide bridges follow: Cys18–Cys25 and Cys23–Cys32. The LRRNT domain occupies 18–46; it reads CHHWLCHCSNRVFLCQDSKVTEIPTDLPR. At 18 to 365 the chain is on the extracellular side; it reads CHHWLCHCSN…EDIMGYNILR (348 aa). LRR repeat units lie at residues 49–72, 73–97, 98–118, 119–143, 144–169, 170–192, 193–216, 217–240, and 241–259; these read IELRFVLTKLRVIPKGSFAGFGDL, EKIEISQNDVLEVIEADVFSNLPKL, HEIRIEKANNLLYINPEAFQN, LPSLRYLLISNTGIKHLPAVHKIQS, LQKVLLDIQDNINIHIVARNSFMGLS, FESVILWLSKNGIEEIHNCAFNG, TQLDELNLSDNNNLEELPNDVFQG, ASGPVILDISRTKVHSLPNHGLEN, and LKKLRARSTYRLKKLPNLD. 2 N-linked (GlcNAc...) asparagine glycosylation sites follow: Asn191 and Asn199. 4 disulfides stabilise this stretch: Cys275/Cys345, Cys276/Cys292, Cys276/Cys355, and Cys292/Cys337. A glycan (N-linked (GlcNAc...) asparagine) is linked at Asn293. A Sulfotyrosine modification is found at Tyr334. The helical transmembrane segment at 366–386 threads the bilayer; sequence VLIWFISILAITGNTTVLVVL. At 387 to 397 the chain is on the cytoplasmic side; that stretch reads TTSQYKLTVPR. A helical membrane pass occupies residues 398-420; the sequence is FLMCNLAFADLCIGIYLLLIASV. The Extracellular portion of the chain corresponds to 421 to 442; it reads DIHTKSQYHNYAIDWQTGAGCD. Cys441 and Cys516 form a disulfide bridge. Residues 443–464 form a helical membrane-spanning segment; it reads AAGFFTVFASELSVYTLTAITL. Over 465-484 the chain is Cytoplasmic; it reads ERWHTITHAMQLECKVQLRH. Residues 485–507 form a helical membrane-spanning segment; the sequence is AASVMVLGWTFAFAAALFPIFGI. Topologically, residues 508–527 are extracellular; sequence SSYMKVSICLPMDIDSPLSQ. The chain crosses the membrane as a helical span at residues 528–549; that stretch reads LYVMALLVLNVLAFVVICGCYT. Residues 550–572 lie on the Cytoplasmic side of the membrane; it reads HIYLTVRNPTIVSSSSDTKIAKR. Residues 573 to 596 form a helical membrane-spanning segment; sequence MATLIFTDFLCMAPISFFAISASL. At 597–607 the chain is on the extracellular side; the sequence is KVPLITVSKAK. A helical transmembrane segment spans residues 608 to 629; that stretch reads ILLVLFYPINSCANPFLYAIFT. The Cytoplasmic segment spans residues 630–692; it reads KNFRRDFFIL…LVPLNHSSQN (63 aa).

Belongs to the G-protein coupled receptor 1 family. FSH/LSH/TSH subfamily. In terms of assembly, homotrimer. Functions as a homotrimer binding the FSH hormone heterodimer composed of CGA and FSHB. Interacts with ARRB2. Interacts with APPL2; interaction is independent of follicle stimulating hormone stimulation. Post-translationally, N-glycosylated; indirectly required for FSH-binding, possibly via a conformational change that allows high affinity binding of hormone. In terms of processing, sulfated. As to expression, sertoli cells and ovarian granulosa cells.

The protein localises to the cell membrane. Its function is as follows. G protein-coupled receptor for follitropin, the follicle-stimulating hormone. Through cAMP production activates the downstream PI3K-AKT and ERK1/ERK2 signaling pathways. The chain is Follicle-stimulating hormone receptor (Fshr) from Rattus norvegicus (Rat).